A 113-amino-acid polypeptide reads, in one-letter code: Single-stranded DNA-binding protein B (113 aa).

One can recognise an SSB domain in the interval methionine 1 to aspartate 104. Tyrosine 82 is modified (phosphotyrosine).

In terms of assembly, homotetramer. In terms of processing, phosphorylated by YwqD, which increases ssDNA affinity; dephosphorylated by YwqE.

Its subcellular location is the cytoplasm. Not essential for replication of the chromosome, but is required for optimal competence. Binds ssDNA, binding is facilitated by DprA, acts as an accessory factor for homologous DNA strand exchange. The polypeptide is Single-stranded DNA-binding protein B (ssbB) (Bacillus subtilis (strain 168)).